A 249-amino-acid polypeptide reads, in one-letter code: Syntaxin-10 (249 aa).

Serine 2 carries the post-translational modification N-acetylserine. Topologically, residues 2 to 228 (SLEDPFFVVR…VSHMTSDRRQ (227 aa)) are cytoplasmic. A coiled-coil region spans residues 41-69 (EELDWTTNELRNGLRSIEWDLEDLEETIG). A Phosphoserine modification is found at serine 108. Residue threonine 110 is modified to Phosphothreonine. 3 positions are modified to phosphoserine: serine 134, serine 140, and serine 143. The t-SNARE coiled-coil homology domain occupies 157–219 (QLIMDEQDQQ…DGVLRKLAKV (63 aa)). The chain crosses the membrane as a helical; Anchor for type IV membrane protein span at residues 229-249 (WCAIAVLVGVLLLVLILLFSL).

It belongs to the syntaxin family. Interacts with VPS52. In terms of tissue distribution, expressed at high levels in heart, skeletal muscle and pancreas.

The protein localises to the golgi apparatus membrane. Its function is as follows. SNARE involved in vesicular transport from the late endosomes to the trans-Golgi network. This Homo sapiens (Human) protein is Syntaxin-10 (STX10).